The sequence spans 251 residues: Triosephosphate isomerase (251 aa).

Substrate is bound at residue Asn12 to Lys14. The Electrophile role is filled by His98. The Proton acceptor role is filled by Glu168. Residues Gly174, Ser213, and Gly234–Gly235 contribute to the substrate site.

This sequence belongs to the triosephosphate isomerase family. Homodimer.

It localises to the cytoplasm. The catalysed reaction is D-glyceraldehyde 3-phosphate = dihydroxyacetone phosphate. The protein operates within carbohydrate biosynthesis; gluconeogenesis. It participates in carbohydrate degradation; glycolysis; D-glyceraldehyde 3-phosphate from glycerone phosphate: step 1/1. Its function is as follows. Involved in the gluconeogenesis. Catalyzes stereospecifically the conversion of dihydroxyacetone phosphate (DHAP) to D-glyceraldehyde-3-phosphate (G3P). The sequence is that of Triosephosphate isomerase from Bradyrhizobium diazoefficiens (strain JCM 10833 / BCRC 13528 / IAM 13628 / NBRC 14792 / USDA 110).